A 102-amino-acid polypeptide reads, in one-letter code: Putative septation protein SpoVG 1 (102 aa).

It belongs to the SpoVG family.

Could be involved in septation. The chain is Putative septation protein SpoVG 1 from Listeria innocua serovar 6a (strain ATCC BAA-680 / CLIP 11262).